Here is a 985-residue protein sequence, read N- to C-terminus: Coiled-coil domain-containing protein 33 (985 aa).

Residues 228–263 (MSPFSTDSDQEGLSWEAGPWQHPAQVPEEPQGRLDT) form a disordered region. One can recognise a C2 domain in the interval 263-398 (TSQDPYPAAN…VFLRGVNEPL (136 aa)). The stretch at 599–745 (VEMNNYRRAM…LEERLCERKE (147 aa)) forms a coiled coil. The disordered stretch occupies residues 821-842 (AERLQDTNGPGHPKSTETLPAQ). A coiled-coil region spans residues 885 to 928 (DKFNLLAKLEQAQSRILSLENQLEESARHWAREKQNLAIRLQEQ). The disordered stretch occupies residues 931-985 (GFGQPPNSIIIDQPNAGASKNPQQLSKLEPSLPSSDKKLNRPSDSQIEISNNQKT). Polar residues-rich tracts occupy residues 946-956 (AGASKNPQQLS) and 972-985 (PSDSQIEISNNQKT).

In Mus musculus (Mouse), this protein is Coiled-coil domain-containing protein 33 (Ccdc33).